The sequence spans 200 residues: ATP-dependent Clp protease proteolytic subunit (200 aa).

Catalysis depends on S98, which acts as the Nucleophile. H123 is an active-site residue.

Belongs to the peptidase S14 family. As to quaternary structure, fourteen ClpP subunits assemble into 2 heptameric rings which stack back to back to give a disk-like structure with a central cavity, resembling the structure of eukaryotic proteasomes.

It localises to the cytoplasm. The enzyme catalyses Hydrolysis of proteins to small peptides in the presence of ATP and magnesium. alpha-casein is the usual test substrate. In the absence of ATP, only oligopeptides shorter than five residues are hydrolyzed (such as succinyl-Leu-Tyr-|-NHMec, and Leu-Tyr-Leu-|-Tyr-Trp, in which cleavage of the -Tyr-|-Leu- and -Tyr-|-Trp bonds also occurs).. Cleaves peptides in various proteins in a process that requires ATP hydrolysis. Has a chymotrypsin-like activity. Plays a major role in the degradation of misfolded proteins. This Ehrlichia canis (strain Jake) protein is ATP-dependent Clp protease proteolytic subunit.